Consider the following 733-residue polypeptide: Serine/threonine-protein kinase ATG1c (733 aa).

One can recognise a Protein kinase domain in the interval 12-269; that stretch reads YLVGRQIGSG…FEEFFNHPFL (258 aa). ATP is bound by residues 18–26 and K41; that span reads IGSGSFSVV. The active-site Proton acceptor is D134. Disordered regions lie at residues 292–363 and 379–414; these read SSGS…ELTS and FETQ…SQDS. Over residues 329–339 the composition is skewed to polar residues; the sequence is KKTSSMKSSSG. 2 stretches are compositionally biased toward basic and acidic residues: residues 342–360 and 379–393; these read VDTR…KHTE and FETQ…RREP. Positions 419 to 422 match the AIM (Atg8-family-interacting motif) motif; the sequence is FVLV. Disordered stretches follow at residues 565–596 and 713–733; these read GSPS…SHDG and HRRS…NRQS. The segment covering 566–577 has biased composition (polar residues); the sequence is SPSQDINKLRSS. Basic and acidic residues predominate over residues 579–596; sequence LKHDTHSSNKVTDLSHDG. The span at 717-733 shows a compositional bias: polar residues; sequence SAGQMQGSSLAMMNRQS.

Belongs to the protein kinase superfamily. Ser/Thr protein kinase family.

The protein localises to the cytoplasmic vesicle. The protein resides in the autophagosome. Its function is as follows. Serine/threonine protein kinase involved in autophagy. The ATG1-ATG13 protein kinase complex regulates downstream events required for autophagosome enclosure and/or vacuolar delivery. The protein is Serine/threonine-protein kinase ATG1c of Arabidopsis thaliana (Mouse-ear cress).